Here is a 542-residue protein sequence, read N- to C-terminus: Phosphoacetylglucosamine mutase 2 (542 aa).

Residue S77 is the Phosphoserine intermediate of the active site. S77 serves as a coordination point for Mg(2+). Phosphoserine is present on residues S77 and S82. Residues D292, D294, and D296 each coordinate Mg(2+). Residues 385 to 387, 510 to 514, and R519 each bind substrate; these read EAN and RSSGT.

This sequence belongs to the phosphohexose mutase family. It depends on Mg(2+) as a cofactor.

The protein localises to the cytoplasm. It is found in the nucleus. The catalysed reaction is N-acetyl-alpha-D-glucosamine 1-phosphate = N-acetyl-D-glucosamine 6-phosphate. It participates in nucleotide-sugar biosynthesis; UDP-N-acetyl-alpha-D-glucosamine biosynthesis; N-acetyl-alpha-D-glucosamine 1-phosphate from alpha-D-glucosamine 6-phosphate (route I): step 2/2. Functionally, catalyzes the conversion of GlcNAc-6-P into GlcNAc-1-P during the synthesis of uridine diphosphate/UDP-GlcNAc, which is a biosynthetic precursor of chitin and also supplies the amino sugars for N-linked oligosaccharides of glycoproteins. The protein is Phosphoacetylglucosamine mutase 2 of Schizosaccharomyces pombe (strain 972 / ATCC 24843) (Fission yeast).